The sequence spans 304 residues: Glycine--tRNA ligase alpha subunit (304 aa).

This sequence belongs to the class-II aminoacyl-tRNA synthetase family. Tetramer of two alpha and two beta subunits.

It localises to the cytoplasm. The enzyme catalyses tRNA(Gly) + glycine + ATP = glycyl-tRNA(Gly) + AMP + diphosphate. The chain is Glycine--tRNA ligase alpha subunit from Photorhabdus laumondii subsp. laumondii (strain DSM 15139 / CIP 105565 / TT01) (Photorhabdus luminescens subsp. laumondii).